A 274-amino-acid chain; its full sequence is Kit ligand (274 aa).

An N-terminal signal peptide occupies residues 1-25 (MKKTQTWIITCIYLQLLLFNPLVRT). Residues 26 to 215 (KGICRNRVTD…ANPLGDSNLQ (190 aa)) lie on the Extracellular side of the membrane. Intrachain disulfides connect Cys29/Cys114 and Cys68/Cys164. 4 N-linked (GlcNAc...) asparagine glycosylation sites follow: Asn90, Asn97, Asn145, and Asn196. Residues 216–238 (WAAMALPAFFSLVIGFAFGALYW) traverse the membrane as a helical segment. The Cytoplasmic segment spans residues 239–274 (KKKQPNLTRTAENIQINEEDNEISMLQEKEREFQEV).

This sequence belongs to the SCF family. As to quaternary structure, homodimer, non-covalently linked. Heterotetramer with KIT, binding two KIT molecules; thereby mediates KIT dimerization and subsequent activation by autophosphorylation. Post-translationally, a soluble form is produced by proteolytic processing of isoform 1 in the extracellular domain.

It is found in the cytoplasm. It localises to the cytoskeleton. The protein localises to the cell membrane. The protein resides in the cell projection. Its subcellular location is the lamellipodium. It is found in the filopodium. It localises to the secreted. Its function is as follows. Ligand for the receptor-type protein-tyrosine kinase KIT. Plays an essential role in the regulation of cell survival and proliferation, hematopoiesis, stem cell maintenance, gametogenesis, mast cell development, migration and function, and in melanogenesis. KITLG/SCF binding can activate several signaling pathways. Promotes phosphorylation of PIK3R1, the regulatory subunit of phosphatidylinositol 3-kinase, and subsequent activation of the kinase AKT1. KITLG/SCF and KIT also transmit signals via GRB2 and activation of RAS, RAF1 and the MAP kinases MAPK1/ERK2 and/or MAPK3/ERK1. KITLG/SCF and KIT promote activation of STAT family members STAT1, STAT3 and STAT5. KITLG/SCF and KIT promote activation of PLCG1, leading to the production of the cellular signaling molecules diacylglycerol and inositol 1,4,5-trisphosphate. KITLG/SCF acts synergistically with other cytokines, probably interleukins. This is Kit ligand (KITLG) from Neovison vison (American mink).